Here is a 60-residue protein sequence, read N- to C-terminus: MAVPKRKTSPSKRGMRRSADALKAPTYVEDKNSGELRRPHHVDLKTGMYRGRQVLEPKEA.

The span at 1-16 (MAVPKRKTSPSKRGMR) shows a compositional bias: basic residues. Residues 1-60 (MAVPKRKTSPSKRGMRRSADALKAPTYVEDKNSGELRRPHHVDLKTGMYRGRQVLEPKEA) form a disordered region. Residues 28 to 44 (VEDKNSGELRRPHHVDL) show a composition bias toward basic and acidic residues.

The protein belongs to the bacterial ribosomal protein bL32 family.

The polypeptide is Large ribosomal subunit protein bL32 (Chelativorans sp. (strain BNC1)).